The chain runs to 366 residues: DNA polymerase IV (366 aa).

The 192-residue stretch at 6–197 (IIHVDMDYFY…LKVSKLWGIG (192 aa)) folds into the UmuC domain. Asp-10 and Asp-114 together coordinate Mg(2+). Glu-115 is an active-site residue.

It belongs to the DNA polymerase type-Y family. In terms of assembly, monomer. It depends on Mg(2+) as a cofactor.

It localises to the cytoplasm. The catalysed reaction is DNA(n) + a 2'-deoxyribonucleoside 5'-triphosphate = DNA(n+1) + diphosphate. In terms of biological role, poorly processive, error-prone DNA polymerase involved in untargeted mutagenesis. Copies undamaged DNA at stalled replication forks, which arise in vivo from mismatched or misaligned primer ends. These misaligned primers can be extended by PolIV. Exhibits no 3'-5' exonuclease (proofreading) activity. May be involved in translesional synthesis. This Methanosarcina acetivorans (strain ATCC 35395 / DSM 2834 / JCM 12185 / C2A) protein is DNA polymerase IV.